We begin with the raw amino-acid sequence, 808 residues long: Putative minor structural protein VP5 (808 aa).

Its subcellular location is the virion. The polypeptide is Putative minor structural protein VP5 (Rice ragged stunt virus (isolate Thailand) (RRSV)).